A 343-amino-acid polypeptide reads, in one-letter code: Zinc finger protein STP3 (343 aa).

Disordered stretches follow at residues tyrosine 31–alanine 56 and serine 71–lysine 140. A compositionally biased stretch (polar residues) spans glycine 33–proline 45. 3 stretches are compositionally biased toward low complexity: residues asparagine 46 to alanine 56, serine 71 to serine 86, and serine 94 to serine 120. 2 positions are modified to phosphoserine: serine 71 and serine 111. Residues histidine 169–histidine 191 form a C2H2-type zinc finger. The disordered stretch occupies residues serine 198 to histidine 222.

The protein resides in the nucleus. The polypeptide is Zinc finger protein STP3 (STP3) (Saccharomyces cerevisiae (strain ATCC 204508 / S288c) (Baker's yeast)).